We begin with the raw amino-acid sequence, 61 residues long: Cecropin-D (61 aa).

Residues 1–22 (MKFSKIFVFVFAIVFATASVSA) form the signal peptide. Positions 23–24 (AP) are cleaved as a propeptide — removed by a dipeptidylpeptidase. A Glutamine amide modification is found at glutamine 60.

This sequence belongs to the cecropin family. As to expression, mainly in fat body. Lower in hemocytes. Not expressed in midguts, malpighian tubules and silk glands.

The protein localises to the secreted. In terms of biological role, cecropins have lytic and antibacterial activity against several Gram-positive and Gram-negative bacteria. This is Cecropin-D (CECD) from Bombyx mori (Silk moth).